We begin with the raw amino-acid sequence, 316 residues long: MGAGHSHDHPGGNERSLKIALALTGTFLIAEVVGGVMTKSLALISDAAHMLTDTVALAIALAAIAIAKRPADKKRTFGYYRFEILAAAFNALLLFGVAIYILYEAYLRLKSPPQIESTGMFVVAVLGLIINLISMRMLSSGQSSSLNVKGAYLEVWSDLLGSVGVIAGAIIIRFTGWAWVDSAIAVLIGLWVLPRTWFLLKSSLNVLLEGVPDDVDLAEVEKQILATPGVKSFHDLHIWALTSGKASLTVHVVNDTAVNPEMEVLPELKQMLADKFDITHVTIQFELAPCEQADAAQHFNASPALVGSKSLAAGGN.

The next 6 helical transmembrane spans lie at 17–37 (LKIALALTGTFLIAEVVGGVM), 47–67 (AAHMLTDTVALAIALAAIAIA), 82–102 (FEILAAAFNALLLFGVAIYIL), 115–135 (IESTGMFVVAVLGLIINLISM), 152–172 (YLEVWSDLLGSVGVIAGAIII), and 174–194 (FTGWAWVDSAIAVLIGLWVLP).

Belongs to the cation diffusion facilitator (CDF) transporter (TC 2.A.4) family. SLC30A subfamily.

It localises to the cell membrane. Functionally, necessary for activation of the czc determinant. This is Cation efflux system protein CzcD (czcD) from Alcaligenes sp. (strain CT14).